A 76-amino-acid chain; its full sequence is Translation initiation factor IF-1 (76 aa).

Residues 1-76 (MEDMAKKDGV…TRGRIVYRYK (76 aa)) enclose the S1-like domain.

The protein belongs to the IF-1 family. As to quaternary structure, component of the 30S ribosomal translation pre-initiation complex which assembles on the 30S ribosome in the order IF-2 and IF-3, IF-1 and N-formylmethionyl-tRNA(fMet); mRNA recruitment can occur at any time during PIC assembly.

The protein resides in the cytoplasm. Its function is as follows. One of the essential components for the initiation of protein synthesis. Stabilizes the binding of IF-2 and IF-3 on the 30S subunit to which N-formylmethionyl-tRNA(fMet) subsequently binds. Helps modulate mRNA selection, yielding the 30S pre-initiation complex (PIC). Upon addition of the 50S ribosomal subunit IF-1, IF-2 and IF-3 are released leaving the mature 70S translation initiation complex. The polypeptide is Translation initiation factor IF-1 (Renibacterium salmoninarum (strain ATCC 33209 / DSM 20767 / JCM 11484 / NBRC 15589 / NCIMB 2235)).